The chain runs to 381 residues: cAMP-dependent protein kinase type I-beta regulatory subunit (381 aa).

A dimerization and phosphorylation region spans residues 2-136 (ASPPACPSEE…ALAKAISKNV (135 aa)). Serine 3 is modified (phosphoserine). Tyrosine 21 bears the 3'-nitrotyrosine mark. Residues 67–98 (ARQKSNSQSDSHDEEVSPTPPNPVVKARRRRG) are disordered. Phosphoserine is present on residues serine 77 and serine 83. Residue threonine 85 is modified to Phosphothreonine. Residues 96–100 (RRGGV) carry the Pseudophosphorylation motif motif. Arginine 97 is modified (omega-N-methylarginine). Residues 137 to 254 (LFAH…SKVS), glutamate 202, arginine 211, 255 to 381 (ILES…SLTV), glutamate 326, and arginine 335 each bind 3',5'-cyclic AMP.

It belongs to the cAMP-dependent kinase regulatory chain family. As to quaternary structure, the inactive holoenzyme is composed of two regulatory chains and two catalytic chains. Activation by cAMP releases the two active catalytic monomers and the regulatory dimer. Interacts with PRKX; regulates this cAMP-dependent protein kinase. Interacts with C2orf88/smAKAP; this interaction may target PRKAR1B to the plasma membrane. Post-translationally, the pseudophosphorylation site binds to the substrate-binding region of the catalytic chain, resulting in the inhibition of its activity. As to expression, four types of regulatory chains are found: I-alpha, I-beta, II-alpha, and II-beta. Their expression varies among tissues and is in some cases constitutive and in others inducible.

The protein localises to the cell membrane. In terms of biological role, regulatory subunit of the cAMP-dependent protein kinases involved in cAMP signaling in cells. This is cAMP-dependent protein kinase type I-beta regulatory subunit (PRKAR1B) from Homo sapiens (Human).